Consider the following 204-residue polypeptide: Large ribosomal subunit protein bL25 (204 aa).

Belongs to the bacterial ribosomal protein bL25 family. CTC subfamily. Part of the 50S ribosomal subunit; part of the 5S rRNA/L5/L18/L25 subcomplex. Contacts the 5S rRNA. Binds to the 5S rRNA independently of L5 and L18.

This is one of the proteins that binds to the 5S RNA in the ribosome where it forms part of the central protuberance. This Pseudomonas paraeruginosa (strain DSM 24068 / PA7) (Pseudomonas aeruginosa (strain PA7)) protein is Large ribosomal subunit protein bL25.